The following is a 153-amino-acid chain: Peptide deformylase (153 aa).

The Fe cation site is built by C87 and H129. E130 is an active-site residue. Residue H133 participates in Fe cation binding.

Belongs to the polypeptide deformylase family. The cofactor is Fe(2+).

It carries out the reaction N-terminal N-formyl-L-methionyl-[peptide] + H2O = N-terminal L-methionyl-[peptide] + formate. Its function is as follows. Removes the formyl group from the N-terminal Met of newly synthesized proteins. Requires at least a dipeptide for an efficient rate of reaction. N-terminal L-methionine is a prerequisite for activity but the enzyme has broad specificity at other positions. The polypeptide is Peptide deformylase (Dictyoglomus turgidum (strain DSM 6724 / Z-1310)).